The sequence spans 85 residues: Toxin BmKaTX15 (85 aa).

An N-terminal signal peptide occupies residues 1–19 (MNYLVFFSLALLVMTGVES). The LCN-type CS-alpha/beta domain maps to 21–83 (RDGYIADDKN…VPIRVPGKCN (63 aa)). 4 disulfide bridges follow: Cys-31-Cys-82, Cys-35-Cys-55, Cys-41-Cys-65, and Cys-45-Cys-67.

It belongs to the long (4 C-C) scorpion toxin superfamily. Sodium channel inhibitor family. Alpha subfamily. As to expression, expressed by the venom gland.

The protein resides in the secreted. In terms of biological role, alpha toxins bind voltage-independently at site-3 of sodium channels (Nav) and inhibit the inactivation of the activated channels, thereby blocking neuronal transmission. This chain is Toxin BmKaTX15, found in Olivierus martensii (Manchurian scorpion).